The primary structure comprises 528 residues: Na(+)/H(+) antiporter NhaB (528 aa).

Transmembrane regions (helical) follow at residues 10–30 (IGNF…SFLI), 63–83 (YPLQ…MTSA), 96–116 (VLLL…LLLF), 131–165 (VSLM…FYAI), 204–224 (LLMH…VGEP), 240–260 (FVIR…LTCL), 305–325 (VLVG…VGLV), 359–379 (LAVF…APVI), 391–411 (LVIF…VFVG), 449–469 (ATPN…APLI), and 476–496 (MVWM…LAIE).

The protein belongs to the NhaB Na(+)/H(+) (TC 2.A.34) antiporter family.

The protein resides in the cell inner membrane. It catalyses the reaction 2 Na(+)(in) + 3 H(+)(out) = 2 Na(+)(out) + 3 H(+)(in). Na(+)/H(+) antiporter that extrudes sodium in exchange for external protons. This Shewanella putrefaciens (strain CN-32 / ATCC BAA-453) protein is Na(+)/H(+) antiporter NhaB.